A 434-amino-acid chain; its full sequence is CBL-interacting protein kinase 15 (434 aa).

The Protein kinase domain occupies 12–267; that stretch reads YELGRLLGKG…IQKIKESTWF (256 aa). Residues 18–26 and K41 each bind ATP; that span reads LGKGTFGKV. Catalysis depends on D135, which acts as the Proton acceptor. The interval 153–182 is activation loop; sequence DFGLSALSESKRQDGLLHTTCGTPAYVAPE. Positions 298-333 constitute an NAF domain; it reads RKKNAHEDVKPMSVTNLNAFEIISFSKGFDLSGMFI. Positions 338–367 are PPI; that stretch reads RNEARFTSDKSASTIISKLEDVAKALNLRV.

Belongs to the protein kinase superfamily. CAMK Ser/Thr protein kinase family. SNF1 subfamily. Mn(2+) is required as a cofactor.

It carries out the reaction L-seryl-[protein] + ATP = O-phospho-L-seryl-[protein] + ADP + H(+). It catalyses the reaction L-threonyl-[protein] + ATP = O-phospho-L-threonyl-[protein] + ADP + H(+). Involved in salt stress tolerance. CIPK serine-threonine protein kinases interact with CBL proteins. Binding of a CBL protein to the regulatory NAF domain of CIPK protein lead to the activation of the kinase in a calcium-dependent manner. This Oryza sativa subsp. japonica (Rice) protein is CBL-interacting protein kinase 15 (CIPK15).